Here is a 400-residue protein sequence, read N- to C-terminus: 1-deoxy-D-xylulose 5-phosphate reductoisomerase (400 aa).

Thr-10, Gly-11, Ser-12, Ile-13, Gly-36, Asn-38, and Asn-124 together coordinate NADPH. Lys-125 contacts 1-deoxy-D-xylulose 5-phosphate. Position 126 (Glu-126) interacts with NADPH. Asp-150 is a binding site for Mn(2+). 4 residues coordinate 1-deoxy-D-xylulose 5-phosphate: Ser-151, Glu-152, Ser-186, and His-209. Glu-152 serves as a coordination point for Mn(2+). Gly-215 lines the NADPH pocket. Ser-222, Asn-227, Lys-228, and Glu-231 together coordinate 1-deoxy-D-xylulose 5-phosphate. Position 231 (Glu-231) interacts with Mn(2+).

It belongs to the DXR family. It depends on Mg(2+) as a cofactor. Mn(2+) serves as cofactor.

It catalyses the reaction 2-C-methyl-D-erythritol 4-phosphate + NADP(+) = 1-deoxy-D-xylulose 5-phosphate + NADPH + H(+). It functions in the pathway isoprenoid biosynthesis; isopentenyl diphosphate biosynthesis via DXP pathway; isopentenyl diphosphate from 1-deoxy-D-xylulose 5-phosphate: step 1/6. Functionally, catalyzes the NADPH-dependent rearrangement and reduction of 1-deoxy-D-xylulose-5-phosphate (DXP) to 2-C-methyl-D-erythritol 4-phosphate (MEP). The polypeptide is 1-deoxy-D-xylulose 5-phosphate reductoisomerase (Aliivibrio fischeri (strain ATCC 700601 / ES114) (Vibrio fischeri)).